The following is a 298-amino-acid chain: GTPase Era (298 aa).

Positions 8–176 constitute an Era-type G domain; it reads HCGSVAVIGR…VRDVLKLLPE (169 aa). A G1 region spans residues 16–23; that stretch reads GRPNVGKS. 16–23 provides a ligand contact to GTP; the sequence is GRPNVGKS. A G2 region spans residues 42–46; that stretch reads QTTRH. Positions 63 to 66 are G3; the sequence is DTPG. GTP-binding positions include 63–67 and 125–128; these read DTPGL and NKID. The G4 stretch occupies residues 125-128; the sequence is NKID. Positions 155–157 are G5; the sequence is ISA. A KH type-2 domain is found at 199-283; the sequence is VREQLMRQLG…FLETWVRVRE (85 aa).

This sequence belongs to the TRAFAC class TrmE-Era-EngA-EngB-Septin-like GTPase superfamily. Era GTPase family. In terms of assembly, monomer.

Its subcellular location is the cytoplasm. It localises to the cell inner membrane. Its function is as follows. An essential GTPase that binds both GDP and GTP, with rapid nucleotide exchange. Plays a role in 16S rRNA processing and 30S ribosomal subunit biogenesis and possibly also in cell cycle regulation and energy metabolism. The sequence is that of GTPase Era from Stenotrophomonas maltophilia (strain K279a).